We begin with the raw amino-acid sequence, 474 residues long: Polyamine oxidase 7 (474 aa).

An N-terminal signal peptide occupies residues 1–27 (MTKPTTMAIFLSIVLLSMAQLPSLVAG). FAD-binding residues include Glu61 and Arg69. Residues Asn103 and Asn150 are each glycosylated (N-linked (GlcNAc...) asparagine). Position 261 (Val261) interacts with FAD. Asn278 carries N-linked (GlcNAc...) asparagine glycosylation. Glu454 is a binding site for FAD.

Belongs to the flavin monoamine oxidase family. The cofactor is FAD.

It is found in the secreted. Its subcellular location is the extracellular space. It localises to the apoplast. It catalyses the reaction spermine + O2 + H2O = 3-aminopropanal + spermidine + H2O2. The enzyme catalyses N(1)-acetylspermine + O2 + H2O = 3-acetamidopropanal + spermidine + H2O2. It carries out the reaction norspermine + O2 + H2O = norspermidine + 3-aminopropanal + H2O2. The catalysed reaction is spermidine + O2 + H2O = 3-aminopropanal + putrescine + H2O2. It catalyses the reaction N(1)-acetylspermidine + O2 + H2O = 3-acetamidopropanal + putrescine + H2O2. The enzyme catalyses thermospermine + O2 + H2O = 3-aminopropanal + spermidine + H2O2. The protein operates within amine and polyamine degradation; spermidine degradation. Its pathway is amine and polyamine degradation; spermine degradation. Flavoenzyme involved in polyamine back-conversion. Catalyzes the oxidation of the secondary amino group of polyamines, such as spermine, spermidine and their acetyl derivatives. Substrate preference is spermine &gt; spermidine &gt; N(1)-acetylspermine &gt; N(1)-acetylspermidine &gt; norspermine &gt; thermospermine. No activity detected when putrescine is used as substrate. May play a role in producing hydrogen peroxide for secondary wall thickening through lignin formation during anther development. This chain is Polyamine oxidase 7, found in Oryza sativa subsp. japonica (Rice).